Consider the following 1116-residue polypeptide: Error-prone DNA polymerase (1116 aa).

This sequence belongs to the DNA polymerase type-C family. DnaE2 subfamily.

It localises to the cytoplasm. It carries out the reaction DNA(n) + a 2'-deoxyribonucleoside 5'-triphosphate = DNA(n+1) + diphosphate. DNA polymerase involved in damage-induced mutagenesis and translesion synthesis (TLS). It is not the major replicative DNA polymerase. This Sinorhizobium medicae (strain WSM419) (Ensifer medicae) protein is Error-prone DNA polymerase.